Here is a 91-residue protein sequence, read N- to C-terminus: Putative regulatory protein CLB_2388 (91 aa).

This sequence belongs to the RemA family.

The polypeptide is Putative regulatory protein CLB_2388 (Clostridium botulinum (strain ATCC 19397 / Type A)).